The primary structure comprises 345 residues: Phosphoribosylformylglycinamidine cyclo-ligase (345 aa).

The protein belongs to the AIR synthase family.

It is found in the cytoplasm. It carries out the reaction 2-formamido-N(1)-(5-O-phospho-beta-D-ribosyl)acetamidine + ATP = 5-amino-1-(5-phospho-beta-D-ribosyl)imidazole + ADP + phosphate + H(+). The protein operates within purine metabolism; IMP biosynthesis via de novo pathway; 5-amino-1-(5-phospho-D-ribosyl)imidazole from N(2)-formyl-N(1)-(5-phospho-D-ribosyl)glycinamide: step 2/2. The sequence is that of Phosphoribosylformylglycinamidine cyclo-ligase from Shewanella denitrificans (strain OS217 / ATCC BAA-1090 / DSM 15013).